Here is an 872-residue protein sequence, read N- to C-terminus: DNA mismatch repair protein MutS (872 aa).

Residue 602-609 (GPNMSGKS) coordinates ATP.

It belongs to the DNA mismatch repair MutS family.

Its function is as follows. This protein is involved in the repair of mismatches in DNA. It is possible that it carries out the mismatch recognition step. This protein has a weak ATPase activity. This is DNA mismatch repair protein MutS from Staphylococcus aureus (strain Mu3 / ATCC 700698).